We begin with the raw amino-acid sequence, 173 residues long: MTYFVLFLGLCFVLGGLAVASNPSPYYGVVGLVLASVAGCGWLLSLGVSFVSLVLFMVYLGGMLVVFVYSVSLAADPFPEAWGDWGVVGYGVGFVVVLVVGLVVGGFVGSLDFGVVTVDSVGMFSVRLDFSGVAMFYSCGVGMFLVAGWGLLLTLFVVLELVRGLSRGAIRAV.

The next 5 membrane-spanning stretches (helical) occupy residues 1–21 (MTYFVLFLGLCFVLGGLAVAS), 27–47 (YGVVGLVLASVAGCGWLLSLG), 48–68 (VSFVSLVLFMVYLGGMLVVFV), 87–107 (VVGYGVGFVVVLVVGLVVGGF), and 139–159 (CGVGMFLVAGWGLLLTLFVVL).

It belongs to the complex I subunit 6 family.

It localises to the mitochondrion membrane. The enzyme catalyses a ubiquinone + NADH + 5 H(+)(in) = a ubiquinol + NAD(+) + 4 H(+)(out). Core subunit of the mitochondrial membrane respiratory chain NADH dehydrogenase (Complex I) that is believed to belong to the minimal assembly required for catalysis. Complex I functions in the transfer of electrons from NADH to the respiratory chain. The immediate electron acceptor for the enzyme is believed to be ubiquinone. The sequence is that of NADH-ubiquinone oxidoreductase chain 6 (MT-ND6) from Aethia pygmaea (Whiskered auklet).